A 352-amino-acid chain; its full sequence is Ribosomal RNA large subunit methyltransferase M (352 aa).

Residues Ser184, 217-220 (APGG), Asp236, Asp256, and Asp272 contribute to the S-adenosyl-L-methionine site. Residue Lys301 is the Proton acceptor of the active site.

This sequence belongs to the class I-like SAM-binding methyltransferase superfamily. RNA methyltransferase RlmE family. RlmM subfamily. As to quaternary structure, monomer.

It is found in the cytoplasm. The catalysed reaction is cytidine(2498) in 23S rRNA + S-adenosyl-L-methionine = 2'-O-methylcytidine(2498) in 23S rRNA + S-adenosyl-L-homocysteine + H(+). In terms of biological role, catalyzes the 2'-O-methylation at nucleotide C2498 in 23S rRNA. This chain is Ribosomal RNA large subunit methyltransferase M, found in Pseudomonas aeruginosa (strain UCBPP-PA14).